Here is a 501-residue protein sequence, read N- to C-terminus: Monocarboxylate transporter 1 (501 aa).

Over 1–22 the chain is Cytoplasmic; it reads MPPAVGGPVGYTPPDGGWGWAV. A helical transmembrane segment spans residues 23–44; that stretch reads VIGAFISIGFSYAFPKSITVFF. Residue Lys38 coordinates (S)-lactate. Residues 45-55 are Extracellular-facing; it reads KEIEGIFNATT. A helical membrane pass occupies residues 56-80; it reads SEVSWISSIMLAVMYGGGPISSVLV. Over 81 to 84 the chain is Cytoplasmic; sequence NKYG. The helical transmembrane segment at 85 to 105 threads the bilayer; it reads SRPVMIVGGILSGSGLIAASF. Topologically, residues 106–109 are extracellular; that stretch reads CNTV. The helical transmembrane segment at 110–132 threads the bilayer; it reads QELYFSVGVIGGLGLAFNLNPAL. Residues 133–146 are Cytoplasmic-facing; sequence TMIGKYFYKRRPLA. A helical transmembrane segment spans residues 147 to 169; the sequence is NGLAMAGSPVFLSTLAPLNQAFF. Topologically, residues 170–174 are extracellular; it reads MIYGW. The helical transmembrane segment at 175 to 194 threads the bilayer; that stretch reads RGSFLILGGLLLNCCVAGAL. At 195-261 the chain is on the cytoplasmic side; sequence MRPIGPKPTT…FLDLSLFKHR (67 aa). Positions 201–236 are disordered; that stretch reads KPTTAEKEKSKGSLQEAGKYETKKGASDANTDLIGG. 3 positions are modified to phosphoserine: Ser210, Ser213, and Ser227. Position 231 is a phosphothreonine (Thr231). The helical transmembrane segment at 262 to 288 threads the bilayer; that stretch reads GFLLYLSGNVLMFFGLFTPLVFLSNYG. The Extracellular segment spans residues 289–295; the sequence is KSKHYSS. A helical membrane pass occupies residues 296-317; it reads EKAAFLLSILAFVDMVARPSMG. Position 309 (Asp309) interacts with H(+). Arg313 is a binding site for (S)-lactate. Residues 318-328 lie on the Cytoplasmic side of the membrane; that stretch reads LVANTKWVRPR. Residues 329 to 349 traverse the membrane as a helical segment; the sequence is VQYFFAASIIANGLCHLAAPL. Residues 350-353 lie on the Extracellular side of the membrane; the sequence is SSTY. Residues 354–375 form a helical membrane-spanning segment; the sequence is IELCIYAGFFGFAFGWLSSVLF. Residues 376–389 are Cytoplasmic-facing; sequence ETLMDLVGPQRFSS. A helical transmembrane segment spans residues 390-410; the sequence is AVGLVTIVECCPVLLGPPVLG. Over 411–421 the chain is Extracellular; the sequence is RLNDIYGDYKY. A helical membrane pass occupies residues 422-443; the sequence is TYWACGIILIVAGIYLFIGMGI. Residues 444–501 are Cytoplasmic-facing; the sequence is NYRLLEKEQKAEKQQKKESKDEETNVDVAEKPKEVIDAAESPEHKATEEDPKEAESPV. Positions 454 to 501 are disordered; the sequence is AEKQQKKESKDEETNVDVAEKPKEVIDAAESPEHKATEEDPKEAESPV. A Phosphoserine modification is found at Ser462. Phosphothreonine is present on Thr467. Residues Ser484 and Ser499 each carry the phosphoserine modification.

It belongs to the major facilitator superfamily. Monocarboxylate porter (TC 2.A.1.13) family. Interacts with BSG; interaction mediates SLC16A1 targeting to the plasma membrane. Interacts with EMB; interaction mediates SLC16A1 targeting to the plasma membrane.

The protein localises to the cell membrane. Its subcellular location is the basolateral cell membrane. The protein resides in the apical cell membrane. The catalysed reaction is (S)-lactate(in) + H(+)(in) = (S)-lactate(out) + H(+)(out). It catalyses the reaction acetate(out) + H(+)(out) = acetate(in) + H(+)(in). The enzyme catalyses acetoacetate(out) + H(+)(out) = acetoacetate(in) + H(+)(in). It carries out the reaction pyruvate(out) + H(+)(out) = pyruvate(in) + H(+)(in). The catalysed reaction is (R)-3-hydroxybutanoate(out) + H(+)(out) = (R)-3-hydroxybutanoate(in) + H(+)(in). It catalyses the reaction 3-methyl-2-oxobutanoate(out) + H(+)(out) = 3-methyl-2-oxobutanoate(in) + H(+)(in). The enzyme catalyses 4-methyl-2-oxopentanoate(out) + H(+)(out) = 4-methyl-2-oxopentanoate(in) + H(+)(in). It carries out the reaction succinate(in) + 2 H(+)(in) = succinate(out) + 2 H(+)(out). In terms of biological role, bidirectional proton-coupled monocarboxylate transporter. Catalyzes the rapid transport across the plasma membrane of many monocarboxylates such as lactate, pyruvate, acetate and the ketone bodies acetoacetate and beta-hydroxybutyrate, and thus contributes to the maintenance of intracellular pH. The transport direction is determined by the proton motive force and the concentration gradient of the substrate monocarboxylate. MCT1 is a major lactate exporter. Plays a role in cellular responses to a high-fat diet by modulating the cellular levels of lactate and pyruvate that contribute to the regulation of central metabolic pathways and insulin secretion, with concomitant effects on plasma insulin levels and blood glucose homeostasis. Facilitates the protonated monocarboxylate form of succinate export, that its transient protonation upon muscle cell acidification in exercising muscle and ischemic heart. Functions via alternate outward- and inward-open conformation states. Protonation and deprotonation of 309-Asp is essential for the conformational transition. This is Monocarboxylate transporter 1 (SLC16A1) from Bos taurus (Bovine).